The primary structure comprises 353 residues: D-alanine--D-alanine ligase (353 aa).

Residues lysine 141 to isoleucine 349 enclose the ATP-grasp domain. Glutamate 176–glutamate 231 lines the ATP pocket. Aspartate 302, glutamate 316, and asparagine 318 together coordinate Mg(2+).

This sequence belongs to the D-alanine--D-alanine ligase family. Requires Mg(2+) as cofactor. It depends on Mn(2+) as a cofactor.

It is found in the cytoplasm. The catalysed reaction is 2 D-alanine + ATP = D-alanyl-D-alanine + ADP + phosphate + H(+). It functions in the pathway cell wall biogenesis; peptidoglycan biosynthesis. In terms of biological role, cell wall formation. The sequence is that of D-alanine--D-alanine ligase from Prochlorococcus marinus (strain MIT 9313).